The following is a 603-amino-acid chain: Myotubularin (603 aa).

Residues 1-13 (MASAPTSKYNSHS) show a composition bias toward polar residues. The interval 1 to 32 (MASAPTSKYNSHSLENESIKRTSRDGVNRDVG) is disordered. A phosphoserine mark is found at S13 and S18. Residues 14–32 (LENESIKRTSRDGVNRDVG) are compositionally biased toward basic and acidic residues. The GRAM domain maps to 29 to 97 (RDVGETLPRL…GVISRIEKMG (69 aa)). Residues 163 to 538 (GWTVYNPVEE…RHLELWVNYY (376 aa)) form the Myotubularin phosphatase domain. Residues N288, N313, and I314 each coordinate a 1,2-diacyl-sn-glycero-3-phospho-(1D-myo-inositol-3,5-bisphosphate). A 1,2-diacyl-sn-glycero-3-phospho-(1D-myo-inositol-3-phosphate) contacts are provided by N288, N313, and I314. C375 serves as the catalytic Phosphocysteine intermediate. Residues S376, D377, G378, W379, D380, R381, K417, and R421 each contribute to the a 1,2-diacyl-sn-glycero-3-phospho-(1D-myo-inositol-3,5-bisphosphate) site. S376, D377, G378, W379, D380, and R381 together coordinate a 1,2-diacyl-sn-glycero-3-phospho-(1D-myo-inositol-3-phosphate). R421 serves as a coordination point for a 1,2-diacyl-sn-glycero-3-phospho-(1D-myo-inositol-3-phosphate). Position 495 is a phosphothreonine (T495). The disordered stretch occupies residues 580–603 (AKLSDPSASPSSPSQMMPHVQTHF). The segment covering 583 to 593 (SDPSASPSSPS) has biased composition (low complexity). S588 is subject to Phosphoserine.

It belongs to the protein-tyrosine phosphatase family. Non-receptor class myotubularin subfamily. In terms of assembly, heterodimer with MTMR12. Interacts with KMT2A/MLL1 (via SET domain). Interacts with DES in skeletal muscle but not in cardiac muscle. Interacts with SPEG.

The protein resides in the cytoplasm. Its subcellular location is the cell membrane. The protein localises to the cell projection. It localises to the filopodium. It is found in the ruffle. The protein resides in the late endosome. Its subcellular location is the myofibril. The protein localises to the sarcomere. The catalysed reaction is a 1,2-diacyl-sn-glycero-3-phospho-(1D-myo-inositol-3-phosphate) + H2O = a 1,2-diacyl-sn-glycero-3-phospho-(1D-myo-inositol) + phosphate. It carries out the reaction a 1,2-diacyl-sn-glycero-3-phospho-(1D-myo-inositol-3,5-bisphosphate) + H2O = a 1,2-diacyl-sn-glycero-3-phospho-(1D-myo-inositol-5-phosphate) + phosphate. The enzyme catalyses 1,2-dioctanoyl-sn-glycero-3-phospho-(1-D-myo-inositol-3-phosphate) + H2O = 1,2-dioctanoyl-sn-glycero-3-phospho-(1D-myo-inositol) + phosphate. It catalyses the reaction 1,2-dioctanoyl-sn-glycero-3-phospho-(1D-myo-inositol-3,5-bisphosphate) + H2O = 1,2-dioctanoyl-sn-glycero-3-phospho-(1D-myo-inositol-5-phosphate) + phosphate. The catalysed reaction is 1,2-dihexadecanoyl-sn-glycero-3-phospho-(1D-myo-inositol-3,5-phosphate) + H2O = 1,2-dihexadecanoyl-sn-glycero-3-phospho-(1D-myo-inositol-5-phosphate) + phosphate. Allosterically activated by phosphatidylinositol 5-phosphate (PI5P). Functionally, lipid phosphatase which dephosphorylates phosphatidylinositol 3-monophosphate (PI3P) and phosphatidylinositol 3,5-bisphosphate (PI(3,5)P2). Has also been shown to dephosphorylate phosphotyrosine- and phosphoserine-containing peptides. Negatively regulates EGFR degradation through regulation of EGFR trafficking from the late endosome to the lysosome. Plays a role in vacuolar formation and morphology. Regulates desmin intermediate filament assembly and architecture. Plays a role in mitochondrial morphology and positioning. Required for skeletal muscle maintenance but not for myogenesis. In skeletal muscles, stabilizes MTMR12 protein levels. The protein is Myotubularin of Bos taurus (Bovine).